A 5209-amino-acid polypeptide reads, in one-letter code: MKCPKCSHEALEKAPKFCSECGHKLQSQSYETTQGTPHDKSQTPSIVPQITNAEMDETGSESKSLEIQNANVSPKRPNENTSPNPKKKKRKKRKKEKKKKSGVSEGPSSLTSDLSDISLTDKEKKMDTDQSSDSDCSSCIVEDTPTPAEPSSHLSPPENETAGPAQLSASALTTGSSKDGEESIGTTQKPVSASASKAPLGVDQQTKEEKVKCKDEGQKSLSAKAQHTPNANVDQNANVQSDANIDKDSQNVEPQKSSSVKTKPSKSTVADPKKTESEKQKSGERDNENSTQPVSSPKLKRNQTEESQKMVFGPNSAPKKNRGSSADSAMKVEKKPAGGKKDSSADQKSKESEDTESQCVTLPKRNTRSTQHISSSDRLTIYFHAVLSKDFKFNPEEDLIFIRAGGPIGNWEENLVELSVSRDLKEHGFLVEGKFICRKIDAEAVSIPYKYVVYKQKKNKYDYEYIYKLDAEVPTNRCLFIKSHLLNDEGEWHQYDDIICAQPAKNMFEWVKKTIWSDEKKNVLQGRKIAGTIMLETIFDLLRSWSKINLNNFFSQLRQFYEIYRNPFVFEKKQTKWYQLDYDEKDVRELLKNFMLMHVTPELQKDSNEKSKFIQEPLKAGLIMLYVWKQYDLKLDYGTLSRLCTAVCLPNLPKDEFLSLWTDITESFSVINSFSDMVEALISKLKAENMPRWIIVIPLLHLLKGTSKPFEQVITKVNSKYEQSWAGLQGLRSNILSPGPQERRAMLNLMKTYGHLVEVDRLLIRSWMYLMPLDDLVECGSIFPVELLDILQLFTMKCPNNISFTSSESTAEALAHIQSQLLQHRYSCPDVDYGIQCIQAACKLLEKICSLVRYFGHSQNFTDIPVACMNLVASVSGFAQTKQEADTFAEKTLVLLNDTKQTVRAWMRQTFKGRLLNSHLFSSHLTGTSFSTETEVWNNIIAIDFVCKDFIKEWRDTFTTDFEGKYQQEDHLDQIEAYCSNIEKLKVSQPYLVNSVEKCALQAVSTICQTKSEWKLFARFNKFRINWRFGNLVSTIILKSWPKDDKGTYFEEEEAVLKHLLGWAAAKNIFQLHGADEKLIDQLSDEAKEKFAMATSLFTNVLNQLVTGKIKMKLLNHILEKKSVFLELLTLDCFSEEEQYKDIDAMKALIQTRQEEVKAIYHERALAGALIAMCHNVEEHVKVDYKYLEDLYSNDMNEMDLDLFMDVHELNQIPTEASLEVPYFELQDDVRSMAEILNIFKDSYIFKLRWGNEAALFVERAEDEELDELDELPITLDVLNEEIFLPCHAAYRNIYTSLKDGSIDFEDIDEIFRAYKGKYEKLAAEVAIMSKQDFNDDQHWVQTRIQQIKQYHELHLAVESAKVVMMVKETLCLQGDFQVLEKLLITTHSDFKSERLDSIDNELIQAKNVLVDITEPRRLCLQELGHRKNFVIWVKEALEDINELKVFVDLASISAGENDLDVDRVACFHDAVLGYSSMLYDLKPDAGFSLFNEMLKKLWKALDNDSNLPKKLCDSARHIEWLKTVKDSHGSVELSSLSLASAINSKGIYVINAQNQKKLALENILKLHIMEEHDGGCETRVYSLEDLRDLQNKLMLMSGKGEQGQCEVDQFAEVFASVQRLVSAFIDLYVAGNPLFRHWEANINCNSKEACIIIDFNLGSVVSVVMVEGDVTEQLPEVCKKMESCLRFWQDFMDKQRSQHYYLNYYTAEQLVYLCHQLAHNNMEEIDDQVLMMLSFIKPSCSTSDLRKAWHILQYDLIRKGPDQNDDLDFQTFVEVSSMTENESTEKSCPTSDDLIQQLGDASGSTKLGVIWNNYMRDMKAFLPDSLDVPSLGYLLEILANSHREDEGDMSQRDKTRTILRELPNGIASGRPNLIICPSEEILISCISIYMNSKNEPLPTYDEVLLCSATTPYEEVELFLRRCLSAGYRGKKIYTMLYVNQLNYEVSYKVEKFFQNQNAHTTNDYRLVLICESNKEHAYLPSAFSQFRLHLIPQQPIPSIQQYLHRHFAVPVGISSAAAVFKDRQNVGVVSSERSGVGKSLYIKRLYEKLKLNSKKPSQLKCIRLTEPKVDENVIIQSLISVLKKNDLSVYHFDVTTMVKKGLHEFLFRLLILGYLMDSKGNMWKSSNKHLYVIEILRPGLSQNDRRAGAKVSFNFLDVFPIVYCRSPKEVLELEMRMEEHPSFGLSDDPLMDDQEFRSEAYQRPYQYLQRFYNGINLDEFLYQGVEGSHVECLQMLFEYCGIIDPSWAELRNFAWFLNLQLQDCEKSVFCDFSFVGDTLLGFKNFVVEFMILMAKDFATPSLSISDQSPGRLHEDFSSANEEDLAPFKIRKRWESEPHPYIFFNDDHDSMTFIGFHLQPNAQKGVDAVDPSNNRVIKQNIMTMELYEGLKLQRVPFNIDFDQLPRWEKIERLSRVLGIQWPLDPDETYELTTDNMLKMLAVHMRFRCGIPVIIMGETGCGKTRLIKFLCEMHRSGVATDNMKLVKVHGGTSSEMIYTKVREAEAMALRNKLDYGFDTVLFFDEANTTEAISSIKEILCDNSAEGQNLTENTGLKIIAACNPYRKHTDVMIKRLESAGLGYRVRAEETDEKLGSIPLRQLVYRVQALPPSMIPLIWDFGQLNDHTEKMYIKQIVERVAETHSIDSGYITVITDVLSASQKYMRTRQDECSFVSLRDVERCMQVFGWFYKKHLMLLSELDKFESIQRTEKTDQHPKDTDERNPILWSLLMAVGVCYHACLEDKEKYRKKICKYFPAAYSPMKVMQEISVIQDIFLEGVPMGENIARNNALKENVFMMVICIELRIPLFLVGKPGSSKSLSKTLVADGMQGQAAHSDLFRKLKQIHLVSFQCSPHSTPEGIINTFKQCARFQEGKNLSEYVSVVVLDEIGLAEDSQKMPLKTLHPLLEEGCIDDQPSPHKKVGFIGISNWALDPAKMNRGIFVSRGDPDENELIESAKGICSSDVMILEKVRECFKPFAHAYLRICKKQEKGFFGLRDYYSLIKMMFAVAKACDQKPSAEQIVKAVLRNFSGKDDVDAVTFFTSRLNIKPELETISAIELVRENVTAIGQDEECRYLLVLTKNYAALRILQQTFFSDQCQPEIIFGSSFPKDQEYTQICRNINRVKICMETGQTIVLLNLQNLYESLYDALNQYYVTLGGQKYVDLGLGTHRVKCRVHKDFRLIVIEEKDIVYKQFPIPLINRLEKHYLDLNTLLKSEQKDIVKNLEQWVQCFTDVKNKHSVAPSARRYSPADAFIGYHTDTCASVVMQVTEQLKGQELSDPRKGILDESKLILLNCATPDAVVRLDCTSLFNVESEHLSRVYFEDQMHNSLAEFILSHIQQEGCSGAFFTEVTTFSRLLTASETQQLQNVVQNIELLSLQQFDTEQSFLKKIKNYLENTTGDKILLIQTDFDEGFQKLNVIASAKYSSINEINKFKKEGSGKIFVYFITKLPRMDGGTSYIGFNGGPWKSIHIDDLRRPKDIVSDIKALQGLTISQLFEEKAEKVDETEAMEVEDMYAGGEDEEDEEKMELEENNGCKDVLDTTALVRSCVQSAVGMLRDQTEGGMRSTKRVEILLMLLAEDQTLQAEFLKTLKTRLHSLLVAHDDNTISAKSWVSREALNVDALHEGGTFRHALWRRVQAVVTPFLAQLVSVVDRDCNLDLLLDRNSGEPLKKLWLEIFRDDKFLSVSPYTRTENNSATKTILVQNYMSVDRNKGCTMPFSWRIKDYLEDLWKHALQQEGHTVKQFEEFFWKTPLGRYISEATNEMQMEFFYRYLQDFISMTMNVTSEVDFEVLRGAFTSSVNEVRIAHEAHESEALSLVWIHVAYHHFKNRIQNLHRMMSLEPQISQMLLENRYASEGKELVLDVLAAVACIEYLEPQNLDGDDQSLAWLRRVKKLQVPVELVCSLESLHNRGDRCRQMVTNIQHGWRRIYSLVLFVEHMLLGVGDLQQKLKPVVLEHTQLLAQVLEQDSNLKKKKPFEAVITVLKTCKDKASQRIIRFGLQLCPVCMGDPRDPLSLPCDHIYCLTCIRQWLVPGQMHCPLCVQEVPDNFELKPSDELRRLISQNASFRMRCNAFFIDLVSTMCFKDNTPPSKDIILHLLSLLMVEASSLPPFKGRDRRFLTKALSPFDDSVDKNPVVRSVVLKLLLNYSFDHVKDYLQQHLTEVEQSKILEETDKAELYCLYMNCLEDSMYDRTQWHTVAEQQNCFLEETRFLLEFLQSDSVSAHTATVEHLQRLARVRLCLDMAADLLVANAGIHDDPSAFIQAFWNNVVNLCRQSRNDWYRVYLIRKLCSLQGVECVKNLLLQETYRWLFPQEILEMNQDDSQIDQYLACGADYKTIRDAVAKFMLDLHINGIQKAIEDCNCTPMKKAVYVLMAFFREVTSLHRTGNPNMHPKPEHCAGLEHFIKNSAIFVNNEMKAFAEKLVRNQLGALRVRPHMPSRDLSLVEVTIHMAAVLLCGNLLLLQPLQKLALSPNNMMASFIPTMPDDMLAVAQQAMGHLQWYFCPNGHPCTVGECGQPMEVSRCPDCDAEIGGSNHRPVDGFRAMQIQADRTQSGHILGDAQRRDLPDMQDTKNMSPAPFALLRLLTHMSMLIGTQNNPQSIMQIIKPAVVHPDAFLMQHLLKDMEQLSKALGKGVDDTVSTIHLAIHSLLEPHQTSQWPDPYDPNLSTKDARNGWENAMNNDVITHHLKVLEHQLKEVNAFIREDERVSSNPVMKLTFGEPGRFLRSLPQNSLIHNSSIWSCRNKVSLMSLTHIVEQNNGRDTLPVLWRFLQREAELRLVRFLPDILVLQRDLVKKFQNITDLTYKTIREFLQDQKAASLTAWYEKRIKIFLTTWNQIRVSLANTGEIKLPADYTEKDLGLDADLQVLLPQRRGLGLCSTALVSYLITIHNDLMYTVEKHTGDDSDYKISPAELTELHVIRYEYDRDLLPLVLANCQYSMECGQETLLEYDLPKIQQQILTRFLQGKPLITINGIPTLVNRQDRNYEIIFKDVKGKVQQELLQPLTQYDLVKELQSYSDVCEALSTVELAVGFLAMTGGEPNMQLGVYLKDVLQMTDHMATHVFKALSRCSLKHCVALWQLLSSLKSETMLRLKRDPFVGISKEYKQPLQEEHKRLLTSFFTKSSADAFLLEMHEFLLLVLKSPKATDTYRPDWRLKHTVVSYMERKDLDVPPEVEEFFPKEILLSEYTSTWNFSVNLRQKRSQS.

2 stretches are compositionally biased toward polar residues: residues 27-52 (SQSY…QITN) and 61-72 (ESKSLEIQNANV). Residues 27 to 373 (SQSYETTQGT…KRNTRSTQHI (347 aa)) are disordered. A compositionally biased stretch (basic residues) spans 85-101 (PKKKKRKKRKKEKKKKS). The segment covering 108 to 118 (SSLTSDLSDIS) has biased composition (low complexity). A compositionally biased stretch (basic and acidic residues) spans 119–128 (LTDKEKKMDT). Polar residues-rich tracts occupy residues 167-177 (LSASALTTGSS) and 184-195 (IGTTQKPVSASA). A compositionally biased stretch (basic and acidic residues) spans 205-218 (QTKEEKVKCKDEGQ). Over residues 219–243 (KSLSAKAQHTPNANVDQNANVQSDA) the composition is skewed to polar residues. Positions 256-269 (KSSSVKTKPSKSTV) are enriched in low complexity. 2 stretches are compositionally biased toward basic and acidic residues: residues 271 to 288 (DPKK…RDNE) and 330 to 352 (MKVE…SKES). ATP is bound by residues 2036 to 2041 (GVGKSL), Glu-2135, Asp-2193, Arg-2252, Lys-2535, and Ser-2610. Residues Cys-4005, Cys-4008, Cys-4020, His-4022, Cys-4025, Cys-4028, Cys-4040, Cys-4043, Cys-4507, and His-4511 each contribute to the Zn(2+) site. The segment at 4005-4043 (CPVCMGDPRDPLSLPCDHIYCLTCIRQWLVPGQMHCPLC) adopts an RING-type zinc-finger fold. Residues 4487 to 4557 (MPDDMLAVAQ…MQIQADRTQS (71 aa)) form an RZ-type zinc finger. The active-site Nucleophile; for E3 ubiquitin-lipopolysaccharide ligase activity is the Cys-4518. The Zn(2+) site is built by Cys-4527 and Cys-4530.

Belongs to the AAA ATPase family.

It is found in the cytoplasm. Its subcellular location is the cytosol. The protein localises to the lipid droplet. The enzyme catalyses S-ubiquitinyl-[E2 ubiquitin-conjugating enzyme]-L-cysteine + [acceptor protein]-L-lysine = [E2 ubiquitin-conjugating enzyme]-L-cysteine + N(6)-ubiquitinyl-[acceptor protein]-L-lysine.. It catalyses the reaction ATP + H2O = ADP + phosphate + H(+). It functions in the pathway protein modification; protein ubiquitination. In terms of biological role, atypical E3 ubiquitin ligase that can catalyze ubiquitination of both proteins and lipids, and which is involved in various processes, such as lipid metabolism, angiogenesis and cell-autonomous immunity. Acts as a key immune sensor by catalyzing ubiquitination of the lipid A moiety of bacterial lipopolysaccharide (LPS) via its RZ-type zinc-finger: restricts the proliferation of cytosolic bacteria, such as Salmonella, by generating the bacterial ubiquitin coat through the ubiquitination of LPS. Ubiquitination of LPS triggers cell-autonomous immunity, such as antibacterial autophagy, leading to degradation of the microbial invader. Involved in lipid metabolism by regulating fat storage and lipid droplet formation; act by inhibiting the lipolytic process. Also regulates lipotoxicity by inhibiting desaturation of fatty acids. Also acts as an E3 ubiquitin-protein ligase via its RING-type zinc finger. Involved in the non-canonical Wnt signaling pathway in vascular development: acts by mediating ubiquitination and degradation of proteins downstream of rspo3, leading to inhibit the non-canonical Wnt signaling pathway and promoting vessel regression. Also has ATPase activity; ATPase activity is required for ubiquitination of LPS. Also involved in neuromuscular regulation. This chain is E3 ubiquitin-protein ligase rnf213-alpha, found in Danio rerio (Zebrafish).